The primary structure comprises 228 residues: 7-cyano-7-deazaguanine synthase (228 aa).

8 to 18 (LSGGLDSTTCL) contributes to the ATP binding site. Residues Cys188, Cys198, Cys201, and Cys204 each coordinate Zn(2+).

Belongs to the QueC family. It depends on Zn(2+) as a cofactor.

It carries out the reaction 7-carboxy-7-deazaguanine + NH4(+) + ATP = 7-cyano-7-deazaguanine + ADP + phosphate + H2O + H(+). The protein operates within purine metabolism; 7-cyano-7-deazaguanine biosynthesis. In terms of biological role, catalyzes the ATP-dependent conversion of 7-carboxy-7-deazaguanine (CDG) to 7-cyano-7-deazaguanine (preQ(0)). This is 7-cyano-7-deazaguanine synthase from Legionella pneumophila (strain Paris).